We begin with the raw amino-acid sequence, 585 residues long: Polyadenylate-binding protein, cytoplasmic and nuclear (585 aa).

The interval 14 to 37 (QLKIEEQTAPTTTESETPKVETSG) is disordered. RRM domains are found at residues 38–116 (ASLY…WSQR), 126–203 (GNIY…LHVS), 219–296 (TNVY…RAQK), and 322–399 (VNLF…IAQR). A PABC domain is found at 488-567 (GQFPRNGQQQ…AHAAYQKFKE (80 aa)).

The protein belongs to the polyadenylate-binding protein type-1 family.

It localises to the cytoplasm. It is found in the nucleus. In terms of biological role, binds the poly(A) tail of mRNA. Appears to be an important mediator of the multiple roles of the poly(A) tail in mRNA biogenesis, stability and translation. In the nucleus, involved in both mRNA cleavage and polyadenylation. Is also required for efficient mRNA export to the cytoplasm. Acts in concert with a poly(A)-specific nuclease (PAN) to affect poly(A) tail shortening, which may occur concomitantly with either nucleocytoplasmic mRNA transport or translational initiation. In the cytoplasm, stimulates translation initiation and regulates mRNA decay through translation termination-coupled poly(A) shortening, probably mediated by PAN. This chain is Polyadenylate-binding protein, cytoplasmic and nuclear (PAB1), found in Eremothecium gossypii (strain ATCC 10895 / CBS 109.51 / FGSC 9923 / NRRL Y-1056) (Yeast).